Here is a 201-residue protein sequence, read N- to C-terminus: Probable GTP-binding protein EngB (201 aa).

The 171-residue stretch at 21-191 folds into the EngB-type G domain; that stretch reads PEAQIALAGR…WQELARAAGV (171 aa). GTP contacts are provided by residues 29–36, 56–60, 75–78, 142–145, and 168–172; these read GRSNVGKS, GKTRS, DLPG, TKAD, and VLTSS. Ser-36 and Thr-58 together coordinate Mg(2+).

This sequence belongs to the TRAFAC class TrmE-Era-EngA-EngB-Septin-like GTPase superfamily. EngB GTPase family. It depends on Mg(2+) as a cofactor.

In terms of biological role, necessary for normal cell division and for the maintenance of normal septation. This Desulfovibrio desulfuricans (strain ATCC 27774 / DSM 6949 / MB) protein is Probable GTP-binding protein EngB.